A 309-amino-acid polypeptide reads, in one-letter code: tRNA dimethylallyltransferase (309 aa).

Residue 9–16 (GPTAVGKT) participates in ATP binding. 11–16 (TAVGKT) lines the substrate pocket. The segment at 34–37 (DSMQ) is interaction with substrate tRNA.

This sequence belongs to the IPP transferase family. Monomer. Mg(2+) serves as cofactor.

The enzyme catalyses adenosine(37) in tRNA + dimethylallyl diphosphate = N(6)-dimethylallyladenosine(37) in tRNA + diphosphate. Its function is as follows. Catalyzes the transfer of a dimethylallyl group onto the adenine at position 37 in tRNAs that read codons beginning with uridine, leading to the formation of N6-(dimethylallyl)adenosine (i(6)A). The chain is tRNA dimethylallyltransferase from Enterococcus faecalis (strain ATCC 700802 / V583).